The primary structure comprises 248 residues: Ribonuclease PH (248 aa).

Residues R86 and 124 to 126 (GTR) each bind phosphate.

It belongs to the RNase PH family. In terms of assembly, homohexameric ring arranged as a trimer of dimers.

It carries out the reaction tRNA(n+1) + phosphate = tRNA(n) + a ribonucleoside 5'-diphosphate. Functionally, phosphorolytic 3'-5' exoribonuclease that plays an important role in tRNA 3'-end maturation. Removes nucleotide residues following the 3'-CCA terminus of tRNAs; can also add nucleotides to the ends of RNA molecules by using nucleoside diphosphates as substrates, but this may not be physiologically important. Probably plays a role in initiation of 16S rRNA degradation (leading to ribosome degradation) during starvation. The protein is Ribonuclease PH of Listeria welshimeri serovar 6b (strain ATCC 35897 / DSM 20650 / CCUG 15529 / CIP 8149 / NCTC 11857 / SLCC 5334 / V8).